The sequence spans 342 residues: Outer spore wall protein RRT8 (342 aa).

The Cytoplasmic portion of the chain corresponds to 1–109 (MKAGIELISH…VLTNPVYWKH (109 aa)). A helical transmembrane segment spans residues 110–130 (ILLFAVCYALIFVTIAGLFYV). Position 131 (Thr-131) is a topological domain, extracellular. A helical transmembrane segment spans residues 132-152 (LVPLLVTWAILLLGPLGVILV). Residues 153–240 (HIQWILQTNV…PRLLFRMFFK (88 aa)) lie on the Cytoplasmic side of the membrane. Residues 241 to 261 (VSNFTSLTLLSLIPIVGPILA) traverse the membrane as a helical segment. Residues 262-299 (NQLMAPKRTFTYLQRYFLLKGFSKKQAKDFQYEHYASF) are Extracellular-facing. The helical transmembrane segment at 300-320 (ICFGMSAGLLELIPFFTIVTI) threads the bilayer. The Cytoplasmic segment spans residues 321–342 (SSNTVGAAKWCTSLLKGERKKE).

This sequence belongs to the LDS family.

It is found in the prospore membrane. The protein resides in the lipid droplet. It localises to the spore wall. Its function is as follows. Involved in spore wall assembly. May be involved in the modulation of rDNA transcription. In Saccharomyces cerevisiae (strain ATCC 204508 / S288c) (Baker's yeast), this protein is Outer spore wall protein RRT8.